Consider the following 413-residue polypeptide: MAP kinase-interacting serine/threonine-protein kinase 1 (413 aa).

Positions 1-26 (MGSSEPLPIVDSDKRRKKKRKTRATD) are disordered. Thr22 carries the post-translational modification Phosphothreonine; by PAK2. Ser27 is subject to Phosphoserine; by PAK2. The 285-residue stretch at 37 to 321 (QLTSELLGEG…AAQVLQHPWV (285 aa)) folds into the Protein kinase domain. ATP is bound by residues 43–51 (LGEGAYAKV) and Lys66. Asp158 functions as the Proton acceptor in the catalytic mechanism. Ser168 and Ser173 each carry phosphoserine. A phosphothreonine mark is found at Thr197, Thr202, and Thr332.

Belongs to the protein kinase superfamily. CAMK Ser/Thr protein kinase family. Interacts with the C-terminal regions of EIF4G1 and EIF4G2. Also binds to dephosphorylated ERK1 and ERK2, and to the p38 kinases. It depends on Mg(2+) as a cofactor. In terms of processing, dual phosphorylation of Thr-197 and Thr-202 activates the kinase. Phosphorylation of Thr-332 activates the kinase. MAPK3/ERK1 is one of the kinases which activate MKNK1/MNK1. Phosphorylation by PAK2 leads to a reduced phosphorylation of EIF4G1.

It catalyses the reaction L-seryl-[protein] + ATP = O-phospho-L-seryl-[protein] + ADP + H(+). The enzyme catalyses L-threonyl-[protein] + ATP = O-phospho-L-threonyl-[protein] + ADP + H(+). Its activity is regulated as follows. Phosphorylated and activated by the p38 kinases and kinases in the Erk pathway. May play a role in the response to environmental stress and cytokines. Appears to regulate translation by phosphorylating EIF4E, thus increasing the affinity of this protein for the 7-methylguanosine-containing mRNA cap. The polypeptide is MAP kinase-interacting serine/threonine-protein kinase 1 (Mknk1) (Rattus norvegicus (Rat)).